Consider the following 2273-residue polypeptide: Retinal-specific phospholipid-transporting ATPase ABCA4 (2273 aa).

Residues 1 to 21 (MGFVRQIQLLLWKNWTLRKRQ) lie on the Cytoplasmic side of the membrane. The chain crosses the membrane as a helical span at residues 22–42 (KIRFVVELVWPLSLFLVLIWL). Over 43–646 (RNANPLYSHH…MPYPCFVDDS (604 aa)) the chain is Extracellular. Cystine bridges form between Cys54-Cys81 and Cys75-Cys324. Residue Asn98 is glycosylated (N-linked (GlcNAc...) asparagine). Mg(2+)-binding residues include Ser336 and Asn338. Cys370 and Cys519 are disulfide-bonded. N-linked (GlcNAc...) asparagine glycosylation is found at Asn415, Asn444, and Asn504. Positions 587 and 653 each coordinate an N-all-trans-retinylidenephosphatidylethanolamine. 3 cysteine pairs are disulfide-bonded: Cys641-Cys1490, Cys1444-Cys1455, and Cys1488-Cys1502. The chain crosses the membrane as a helical span at residues 647–667 (FMIILNRCFPIFMVLAWIYSV). The Cytoplasmic segment spans residues 668 to 699 (SMTVKSIVLEKELRLKETLKNQGVSNAVIWCT). The chain crosses the membrane as a helical span at residues 700-720 (WFLDSFSIMSMSIFLLTIFIM). Residues 721 to 730 (HGRILHYSDP) lie on the Extracellular side of the membrane. A helical transmembrane segment spans residues 731–751 (FILFLFLLAFSTATIMLCFLL). The Cytoplasmic segment spans residues 752–759 (STFFSKAS). A helical transmembrane segment spans residues 760 to 780 (LAAACSGVIYFTLYLPHILCF). The Extracellular portion of the chain corresponds to 781–835 (AWQDRMTAELKKAVSLLSPVAFGFGTEYLVRFEEQGLGLQWSNIGNSPTEGDEFS). The helical transmembrane segment at 836–856 (FLLSMQMMLLDAAVYGLLAWY) threads the bilayer. The Cytoplasmic segment spans residues 857-1376 (LDQVFPGDYG…IRSHKDFLAQ (520 aa)). Positions 891-911 (ERALEKTEPLTEETEDPEHPE) are disordered. Thr901 bears the Phosphothreonine mark. In terms of domain architecture, ABC transporter 1 spans 929 to 1160 (VCVKNLVKIF…FGTGLYLTLV (232 aa)). Residues Phe938, Gly966, and Lys969 each contribute to the ATP site. A Mg(2+)-binding site is contributed by Thr970. ATP is bound by residues Thr971, Gln1010, Lys1054, Gly1064, Gly1065, and His1118. Ser1185 bears the Phosphoserine mark. Positions 1284–1345 (PLFAGGAQQK…EPECPGPQLN (62 aa)) are disordered. The residue at position 1313 (Thr1313) is a Phosphothreonine. At Ser1317 the chain carries Phosphoserine. Positions 1331-1340 (GQPPPEPECP) are enriched in pro residues. The helical transmembrane segment at 1377–1397 (IVLPATFVFLALMLSIVIPPF) threads the bilayer. The Extracellular portion of the chain corresponds to 1398–1727 (GEYPALTLHP…VSPTTYWVTN (330 aa)). A glycan (N-linked (GlcNAc...) asparagine) is linked at Asn1469. Asn1529, Asn1588, and Asn1662 each carry an N-linked (GlcNAc...) asparagine glycan. Residues 1728-1748 (FLWDIMNYSVSAGLVVGIFIG) traverse the membrane as a helical segment. Over 1749–1759 (FQKKAYTSPEN) the chain is Cytoplasmic. A helical transmembrane segment spans residues 1760–1780 (LPALVALLLLYGWAVIPMMYP). Over 1781-1792 (ASFLFDVPSTAY) the chain is Extracellular. A helical transmembrane segment spans residues 1793-1813 (VALSCANLFIGINSSAITFIL). Residues 1814–1831 (ELFENNRTLLRFNAVLRK) lie on the Cytoplasmic side of the membrane. The chain crosses the membrane as a helical span at residues 1832–1852 (LLIVFPHFCLGRGLIDLALSQ). Residues 1853 to 1873 (AVTDVYARFGEEHSANPFHWD) are Extracellular-facing. The helical transmembrane segment at 1874–1894 (LIGKNLFAMVVEGVVYFLLTL) threads the bilayer. Residues 1895–2273 (LVQRHFFLSQ…AAGASRQAQD (379 aa)) are Cytoplasmic-facing. Residues 1938-2170 (LRLHELTKIY…FGDGYIVTMK (233 aa)) enclose the ABC transporter 2 domain. Positions 1974, 1975, 1978, 1979, 1980, and 2073 each coordinate ATP. Thr1979 contributes to the Mg(2+) binding site. The essential for ATP binding and ATPase activity stretch occupies residues 2244 to 2249 (VFVNFA).

The protein belongs to the ABC transporter superfamily. ABCA family. Post-translationally, proteolytic cleavage by trypsin leads to a 120-kDa N-terminal fragment and a 115-kDa C-terminal fragment that are linked through disulfide bonds. In terms of processing, N-glycosylated. Phosphorylation is independent of light exposure and modulates ATPase activity. As to expression, retinal-specific. Seems to be exclusively found in the rims of rod photoreceptor cells.

The protein resides in the membrane. It is found in the endoplasmic reticulum. The protein localises to the cytoplasmic vesicle. It localises to the cell projection. Its subcellular location is the cilium. The protein resides in the photoreceptor outer segment. It catalyses the reaction an N-all-trans-retinylidenephosphatidylethanolamine(out) + ATP + H2O = an N-all-trans-retinylidenephosphatidylethanolamine(in) + ADP + phosphate + H(+). It carries out the reaction ATP + H2O + phospholipidSide 1 = ADP + phosphate + phospholipidSide 2.. The catalysed reaction is a 1,2-diacyl-sn-glycero-3-phosphoethanolamine(out) + ATP + H2O = a 1,2-diacyl-sn-glycero-3-phosphoethanolamine(in) + ADP + phosphate + H(+). The enzyme catalyses N-11-cis-retinylidenephosphatidylethanolamine(out) + ATP + H2O = N-11-cis-retinylidenephosphatidylethanolamine(in) + ADP + phosphate + H(+). It catalyses the reaction ATP + H2O = ADP + phosphate + H(+). ATPase activity is decreased by cholesterol and ceramide. Phospholipids translocase activity is highly reduced by berylium fluoride and aluminum floride. N-ethylmaleimide inhibits phospholipid translocase activity. In terms of biological role, flippase that catalyzes in an ATP-dependent manner the transport of retinal-phosphatidylethanolamine conjugates like 11-cis and all-trans isomers of N-retinylidene-phosphatidylethanolamine (N-Ret-PE) from the lumen to the cytoplasmic leaflet of photoreceptor outer segment disk membranes, where 11-cis-retinylidene-phosphatidylethanolamine is then isomerized to its all-trans isomer and reduced by RDH8 to produce all-trans-retinol. This transport activity ensures that all-trans-retinal generated from photoexcitation and 11-cis-retinal not needed for the regeneration of rhodopsin and cone opsins are effectively cleared from the photoreceptors, therefore preventing their accumulation and the formation of toxic bisretinoid. Displays ATPase activity in vitro in absence of retinal substrate. May display GTPase activity that is strongly influenced by the lipid environment and the presence of retinoid compounds. Binds the unprotonated form of N-retinylidene-phosphatidylethanolamine with high affinity in the absence of ATP, and ATP binding and hydrolysis induce a protein conformational change that causes N-retinylidene-phosphatidylethanolamine release. The protein is Retinal-specific phospholipid-transporting ATPase ABCA4 of Homo sapiens (Human).